The sequence spans 300 residues: Non-secreted LysM effector LysM16 (300 aa).

The LysM domain occupies 176 to 222; it reads EWHTVFSGDTCQLIEAEYGITLEKFIALNTYVNSTCGNIWPDYAYCV.

Belongs to the secreted LysM effector family.

Non-secreted LysM effector that might be involved in manipulation of host defenses for successful infection. The chain is Non-secreted LysM effector LysM16 from Penicillium expansum (Blue mold rot fungus).